A 111-amino-acid chain; its full sequence is Microtubule nucleation factor SSNA1 (111 aa).

Residues 6 to 71 adopt a coiled-coil conformation; it reads QALQNHNNEL…ARKTETKNEY (66 aa).

This sequence belongs to the SSNA1 family. As to quaternary structure, self-assembles into fibrils in a head-to-tail fashion.

It localises to the cytoplasm. Its subcellular location is the cytoskeleton. It is found in the flagellum basal body. The protein resides in the flagellum axoneme. Microtubule-binding protein which stabilizes dynamic microtubules by slowing growth and shrinkage at both plus and minus ends and serves as a sensor of microtubule damage. Induces microtubule branching which is mediated by the formation of long SSNA1 fibrils which guide microtubule protofilaments to split apart from the mother microtubule and form daughter microtubules. Required for cell division. This chain is Microtubule nucleation factor SSNA1, found in Chlamydomonas reinhardtii (Chlamydomonas smithii).